The following is a 364-amino-acid chain: Putative acetyl-CoA C-acetyltransferase YhfS (364 aa).

The Acyl-thioester intermediate role is filled by Cys-82. His-318 (proton acceptor) is an active-site residue.

Belongs to the thiolase-like superfamily. Thiolase family.

Its function is as follows. May be involved in fatty acid metabolism. This Bacillus subtilis (strain 168) protein is Putative acetyl-CoA C-acetyltransferase YhfS (yhfS).